The sequence spans 346 residues: Holliday junction branch migration complex subunit RuvB (346 aa).

The segment at 1 to 182 (MKIELLTTPA…FGINSRFDYY (182 aa)) is large ATPase domain (RuvB-L). ATP-binding positions include isoleucine 21, arginine 22, glycine 63, lysine 66, threonine 67, threonine 68, 129 to 131 (EDF), arginine 172, tyrosine 182, and arginine 219. Residue threonine 67 participates in Mg(2+) binding. A small ATPAse domain (RuvB-S) region spans residues 183–253 (SPDLLEGIVM…IAMKTLECLD (71 aa)). The segment at 256–346 (EEGLDDMDKK…GLFDADGNLS (91 aa)) is head domain (RuvB-H). Residues arginine 311 and arginine 316 each coordinate DNA.

Belongs to the RuvB family. Homohexamer. Forms an RuvA(8)-RuvB(12)-Holliday junction (HJ) complex. HJ DNA is sandwiched between 2 RuvA tetramers; dsDNA enters through RuvA and exits via RuvB. An RuvB hexamer assembles on each DNA strand where it exits the tetramer. Each RuvB hexamer is contacted by two RuvA subunits (via domain III) on 2 adjacent RuvB subunits; this complex drives branch migration. In the full resolvosome a probable DNA-RuvA(4)-RuvB(12)-RuvC(2) complex forms which resolves the HJ.

It is found in the cytoplasm. The catalysed reaction is ATP + H2O = ADP + phosphate + H(+). The RuvA-RuvB-RuvC complex processes Holliday junction (HJ) DNA during genetic recombination and DNA repair, while the RuvA-RuvB complex plays an important role in the rescue of blocked DNA replication forks via replication fork reversal (RFR). RuvA specifically binds to HJ cruciform DNA, conferring on it an open structure. The RuvB hexamer acts as an ATP-dependent pump, pulling dsDNA into and through the RuvAB complex. RuvB forms 2 homohexamers on either side of HJ DNA bound by 1 or 2 RuvA tetramers; 4 subunits per hexamer contact DNA at a time. Coordinated motions by a converter formed by DNA-disengaged RuvB subunits stimulates ATP hydrolysis and nucleotide exchange. Immobilization of the converter enables RuvB to convert the ATP-contained energy into a lever motion, pulling 2 nucleotides of DNA out of the RuvA tetramer per ATP hydrolyzed, thus driving DNA branch migration. The RuvB motors rotate together with the DNA substrate, which together with the progressing nucleotide cycle form the mechanistic basis for DNA recombination by continuous HJ branch migration. Branch migration allows RuvC to scan DNA until it finds its consensus sequence, where it cleaves and resolves cruciform DNA. This Chlorobium phaeovibrioides (strain DSM 265 / 1930) (Prosthecochloris vibrioformis (strain DSM 265)) protein is Holliday junction branch migration complex subunit RuvB.